We begin with the raw amino-acid sequence, 75 residues long: UPF0346 protein LGAS_0911 (75 aa).

It belongs to the UPF0346 family.

The polypeptide is UPF0346 protein LGAS_0911 (Lactobacillus gasseri (strain ATCC 33323 / DSM 20243 / BCRC 14619 / CIP 102991 / JCM 1131 / KCTC 3163 / NCIMB 11718 / NCTC 13722 / AM63)).